The sequence spans 108 residues: Thiosulfate sulfurtransferase GlpE (108 aa).

Residues 17–105 (RQGAAVLVDI…WHRRFPANVA (89 aa)) form the Rhodanese domain. The active-site Cysteine persulfide intermediate is the cysteine 65.

It belongs to the GlpE family.

Its subcellular location is the cytoplasm. The catalysed reaction is thiosulfate + hydrogen cyanide = thiocyanate + sulfite + 2 H(+). It carries out the reaction thiosulfate + [thioredoxin]-dithiol = [thioredoxin]-disulfide + hydrogen sulfide + sulfite + 2 H(+). Functionally, transferase that catalyzes the transfer of sulfur from thiosulfate to thiophilic acceptors such as cyanide or dithiols. May function in a CysM-independent thiosulfate assimilation pathway by catalyzing the conversion of thiosulfate to sulfite, which can then be used for L-cysteine biosynthesis. This Salmonella agona (strain SL483) protein is Thiosulfate sulfurtransferase GlpE.